Consider the following 436-residue polypeptide: DNA-dependent metalloprotease SPRTN (436 aa).

One can recognise a SprT-like domain in the interval 19 to 186; it reads IRALFLEFND…RTCGGEFVKI (168 aa). H85 lines the Zn(2+) pocket. E86 is an active-site residue. Positions 89 and 104 each coordinate Zn(2+). The tract at residues 184 to 219 is disordered; it reads VKIKEPENYSQKRKRNNDPTKSELGNSSHVKINKGK. Residues 231 to 239 carry the SHP-box motif; that stretch reads FSGTGYKLF. The PIP-box motif lies at 271–277; that stretch reads QTDSTFL. The segment at 300-321 is disordered; sequence GSPIKLPSSSNNKSHQDSSKQK. The UBZ4-type zinc-finger motif lies at 408-435; sequence KVCCPVCGTEIFESKINDHLDTCLQNYN. Zn(2+)-binding residues include C411, C414, H426, and C430.

This sequence belongs to the Spartan family. As to quaternary structure, homodimer. It depends on Zn(2+) as a cofactor. Post-translationally, autocatalytically cleaved in response to double-stranded DNA-binding: autocatalytic cleavage takes place in trans and leads to inactivation.

Its subcellular location is the nucleus. The protein localises to the chromosome. Its activity is regulated as follows. DNA-binding activates the protease activity: single-stranded DNA-binding specifically activates ability to cleave covalent DNA-protein cross-links (DPCs). In contrast, double-stranded DNA-binding specifically activates autocatalytic cleavage, and subsequent inactivation. In terms of biological role, DNA-dependent metalloendopeptidase that mediates the proteolytic cleavage of covalent DNA-protein cross-links (DPCs) during DNA synthesis, thereby playing a key role in maintaining genomic integrity. DPCs are highly toxic DNA lesions that interfere with essential chromatin transactions, such as replication and transcription, and which are induced by reactive agents, such as UV light or formaldehyde. Associates with the DNA replication machinery and specifically removes DPCs during DNA synthesis. Catalyzes proteolytic cleavage of the hmces DNA-protein cross-link following unfolding by the brip1/fancj helicase. Acts as a pleiotropic protease for DNA-binding proteins cross-linked with DNA, such as top1, top2a, histones H3 and H4. Mediates degradation of DPCs that are not ubiquitinated, while it is not able to degrade ubiquitinated DPCs. SPRTN activation requires polymerase collision with DPCs followed by helicase bypass of DPCs. May also act as a 'reader' of ubiquitinated pcna: facilitates chromatin association of rad18 and is required for efficient pcna monoubiquitination, promoting a feed-forward loop to enhance pcna ubiquitination and translesion DNA synthesis. Acts as a regulator of translesion DNA synthesis by recruiting vcp/p97 to sites of DNA damage. This chain is DNA-dependent metalloprotease SPRTN, found in Xenopus tropicalis (Western clawed frog).